Consider the following 249-residue polypeptide: Large ribosomal subunit protein uL30A (249 aa).

The protein belongs to the universal ribosomal protein uL30 family. Component of the small ribosomal subunit (SSU). Mature yeast ribosomes consist of a small (40S) and a large (60S) subunit. The 40S small subunit contains 1 molecule of ribosomal RNA (18S rRNA) and at least 33 different proteins. The large 60S subunit contains 3 rRNA molecules (25S, 5.8S and 5S rRNA) and at least 46 different proteins.

The protein localises to the cytoplasm. It localises to the nucleus. Its subcellular location is the nucleolus. In terms of biological role, component of the ribosome, a large ribonucleoprotein complex responsible for the synthesis of proteins in the cell. The small ribosomal subunit (SSU) binds messenger RNAs (mRNAs) and translates the encoded message by selecting cognate aminoacyl-transfer RNA (tRNA) molecules. The large subunit (LSU) contains the ribosomal catalytic site termed the peptidyl transferase center (PTC), which catalyzes the formation of peptide bonds, thereby polymerizing the amino acids delivered by tRNAs into a polypeptide chain. The nascent polypeptides leave the ribosome through a tunnel in the LSU and interact with protein factors that function in enzymatic processing, targeting, and the membrane insertion of nascent chains at the exit of the ribosomal tunnel. This is Large ribosomal subunit protein uL30A (rlp7) from Schizosaccharomyces pombe (strain 972 / ATCC 24843) (Fission yeast).